The sequence spans 650 residues: Chaperone protein DnaK (650 aa).

Position 200 is a phosphothreonine; by autocatalysis (T200). The interval A614 to Q634 is disordered.

The protein belongs to the heat shock protein 70 family.

Functionally, acts as a chaperone. This Burkholderia cenocepacia (strain ATCC BAA-245 / DSM 16553 / LMG 16656 / NCTC 13227 / J2315 / CF5610) (Burkholderia cepacia (strain J2315)) protein is Chaperone protein DnaK.